Consider the following 147-residue polypeptide: UPF0306 protein YhbP (147 aa).

It belongs to the UPF0306 family.

The sequence is that of UPF0306 protein YhbP from Escherichia coli O1:K1 / APEC.